Reading from the N-terminus, the 862-residue chain is Leucine--tRNA ligase (862 aa).

Positions 44–54 (PYPSGRIHMGH) match the 'HIGH' region motif. A 'KMSKS' region motif is present at residues 622-626 (KMSKS). Lysine 625 lines the ATP pocket.

Belongs to the class-I aminoacyl-tRNA synthetase family.

Its subcellular location is the cytoplasm. It catalyses the reaction tRNA(Leu) + L-leucine + ATP = L-leucyl-tRNA(Leu) + AMP + diphosphate. The protein is Leucine--tRNA ligase of Rhodospirillum rubrum (strain ATCC 11170 / ATH 1.1.1 / DSM 467 / LMG 4362 / NCIMB 8255 / S1).